Consider the following 446-residue polypeptide: Exodeoxyribonuclease 7 large subunit (446 aa).

Belongs to the XseA family. As to quaternary structure, heterooligomer composed of large and small subunits.

Its subcellular location is the cytoplasm. It catalyses the reaction Exonucleolytic cleavage in either 5'- to 3'- or 3'- to 5'-direction to yield nucleoside 5'-phosphates.. Its function is as follows. Bidirectionally degrades single-stranded DNA into large acid-insoluble oligonucleotides, which are then degraded further into small acid-soluble oligonucleotides. In Staphylococcus carnosus (strain TM300), this protein is Exodeoxyribonuclease 7 large subunit.